The sequence spans 404 residues: Probable tRNA sulfurtransferase (404 aa).

The 106-residue stretch at 60-165 folds into the THUMP domain; the sequence is QPIVEALKLV…DEAAYISYEE (106 aa). Residues 183–184, 208–209, arginine 265, glycine 287, and glutamine 296 each bind ATP; these read ML and HF.

This sequence belongs to the ThiI family.

It is found in the cytoplasm. The enzyme catalyses [ThiI sulfur-carrier protein]-S-sulfanyl-L-cysteine + a uridine in tRNA + 2 reduced [2Fe-2S]-[ferredoxin] + ATP + H(+) = [ThiI sulfur-carrier protein]-L-cysteine + a 4-thiouridine in tRNA + 2 oxidized [2Fe-2S]-[ferredoxin] + AMP + diphosphate. It catalyses the reaction [ThiS sulfur-carrier protein]-C-terminal Gly-Gly-AMP + S-sulfanyl-L-cysteinyl-[cysteine desulfurase] + AH2 = [ThiS sulfur-carrier protein]-C-terminal-Gly-aminoethanethioate + L-cysteinyl-[cysteine desulfurase] + A + AMP + 2 H(+). It functions in the pathway cofactor biosynthesis; thiamine diphosphate biosynthesis. Catalyzes the ATP-dependent transfer of a sulfur to tRNA to produce 4-thiouridine in position 8 of tRNAs, which functions as a near-UV photosensor. Also catalyzes the transfer of sulfur to the sulfur carrier protein ThiS, forming ThiS-thiocarboxylate. This is a step in the synthesis of thiazole, in the thiamine biosynthesis pathway. The sulfur is donated as persulfide by IscS. The chain is Probable tRNA sulfurtransferase from Streptococcus pyogenes serotype M2 (strain MGAS10270).